We begin with the raw amino-acid sequence, 407 residues long: Imidazolonepropionase (407 aa).

Positions 68 and 70 each coordinate Fe(3+). The Zn(2+) site is built by His68 and His70. 4-imidazolone-5-propanoate contacts are provided by Arg77, Tyr140, and His173. Position 140 (Tyr140) interacts with N-formimidoyl-L-glutamate. His238 is a Fe(3+) binding site. His238 is a binding site for Zn(2+). Gln241 serves as a coordination point for 4-imidazolone-5-propanoate. Fe(3+) is bound at residue Asp313. Asp313 is a Zn(2+) binding site. 2 residues coordinate N-formimidoyl-L-glutamate: Asn315 and Gly317. Thr318 is a binding site for 4-imidazolone-5-propanoate.

The protein belongs to the metallo-dependent hydrolases superfamily. HutI family. Requires Zn(2+) as cofactor. It depends on Fe(3+) as a cofactor.

Its subcellular location is the cytoplasm. It catalyses the reaction 4-imidazolone-5-propanoate + H2O = N-formimidoyl-L-glutamate. It participates in amino-acid degradation; L-histidine degradation into L-glutamate; N-formimidoyl-L-glutamate from L-histidine: step 3/3. In terms of biological role, catalyzes the hydrolytic cleavage of the carbon-nitrogen bond in imidazolone-5-propanoate to yield N-formimidoyl-L-glutamate. It is the third step in the universal histidine degradation pathway. This is Imidazolonepropionase from Burkholderia cenocepacia (strain ATCC BAA-245 / DSM 16553 / LMG 16656 / NCTC 13227 / J2315 / CF5610) (Burkholderia cepacia (strain J2315)).